The following is a 113-amino-acid chain: Small ribosomal subunit protein bS6 (113 aa).

Belongs to the bacterial ribosomal protein bS6 family.

Functionally, binds together with bS18 to 16S ribosomal RNA. This chain is Small ribosomal subunit protein bS6 (rpsF), found in Buchnera aphidicola subsp. Acyrthosiphon pisum (strain APS) (Acyrthosiphon pisum symbiotic bacterium).